Here is a 450-residue protein sequence, read N- to C-terminus: ATP-dependent protease ATPase subunit HslU (450 aa).

ATP contacts are provided by residues Val-29, Gly-71–Glu-76, Asp-261, Glu-328, and Arg-400.

It belongs to the ClpX chaperone family. HslU subfamily. A double ring-shaped homohexamer of HslV is capped on each side by a ring-shaped HslU homohexamer. The assembly of the HslU/HslV complex is dependent on binding of ATP.

Its subcellular location is the cytoplasm. ATPase subunit of a proteasome-like degradation complex; this subunit has chaperone activity. The binding of ATP and its subsequent hydrolysis by HslU are essential for unfolding of protein substrates subsequently hydrolyzed by HslV. HslU recognizes the N-terminal part of its protein substrates and unfolds these before they are guided to HslV for hydrolysis. The protein is ATP-dependent protease ATPase subunit HslU of Rickettsia canadensis (strain McKiel).